The sequence spans 253 residues: Oxidoreductase AOL_s00215g277 (253 aa).

A helical membrane pass occupies residues 181-203 (FFGYWLTVILGYYIGSLLGYQPF).

This sequence belongs to the oxidoreductase OpS7 family.

It localises to the membrane. It functions in the pathway secondary metabolite biosynthesis; terpenoid biosynthesis. Functionally, oxidoreductase; part of the gene cluster that mediates the biosynthesis of sesquiterpenyl epoxy-cyclohexenoids (SECs) such as anthrobotrisins and arthrosporols, metabolites that possess a novel hybrid carbon skeleton consisting of a polyketide-derived epoxycyclohexenol combined with a terpenoid-derived monocyclic sesquiterpenol substructure (PKS-PTS hybrid). The SEC pathway plays an important role for fungal soil colonization via decreasing fungal nematode-capturing ability. Within the pathway, the oxidoreductase AOL_s00215g277 seems to play a role in the farnesylation step of toluquinol to produce farnesyl hydroquinone, the hybrid precursor for biosynthesis of SECs. The pathway begins with the biosynthesis of 6-methylsalicylic acid (6-MSA), the first precursor of the polyketide-derived epoxycyclohexenol in arthrosporols, by the polyketide synthase (PKS) AOL_s00215g283 via condensation of 1 acetate and 3 malonate units. The 6-methylsalicylic acid decarboxylase AOL_s00215g281 then catalyzes the decarboxylation of 6-methylsalicylic acid to yield m-cresol. The cytochrome P450 monooxygenase AOL_s00215g282 further oxidizes m-cresol to yield toluquinol. With the assistance of the oxidoreductase AOL_s00215g277, the polyprenyl transferase AOL_s00215g276 catalyzes the farnesylation of toluquinol to produce farnesyl hydroquinone, the hybrid precursor for biosynthesis of SECs. Farnesyl hydroquinone undergoes epoxidation and then subsequent dehydrogenation to form farnesyl epoxy-quinone, the first and simplest SEC. The cytochrome P450 monooxygenase AOL_s00215g278 and the FAD-dependent monooxygenase AOL_s00215g279 might be involved in the oxygenation of the phenol moiety, most likely in the epoxy formation. The cytochrome P450 monooxygenases AOL_s00215g274 and AOL_s00215g280 are involved in specific regional ketone reductions at respectively C-4 and C-1 of farnesyl epoxy-quinone PubMed:33823587. The sequence is that of Oxidoreductase AOL_s00215g277 from Arthrobotrys oligospora (strain ATCC 24927 / CBS 115.81 / DSM 1491) (Nematode-trapping fungus).